We begin with the raw amino-acid sequence, 288 residues long: MLIIKKSSELTCVIKNLKKKNKSKIALIPTMGNLHRGHLELIKIGKLKSNILIISIFINPAQFSNSKDFRNYPKTLNEDIKKLIEYKVDILFCPTLKSMYPFGYKNHTLVNVVQYSSILDGKTMSNHFIGVATIISKLFNLINPDIAIFGQKDFQQLIMIRQLVLHMNYNIKILSAPIIRCFDGLALSSRNRHLSLEERKKAPKIYNILLELSKKIKLNKLYNLKKDYDAILKNYLIKLNNYGFKVEVLSIRNAKNLMPIDENSKQAVILCSAKIGSIRLVDNIKIKL.

Position 31–38 (31–38 (MGNLHRGH)) interacts with ATP. Residue His-38 is the Proton donor of the active site. Gln-62 is a (R)-pantoate binding site. Gln-62 contacts beta-alanine. 150 to 153 (GQKD) contacts ATP. (R)-pantoate is bound at residue Gln-156. Residues Ile-179 and 187–190 (LSSR) each bind ATP.

Belongs to the pantothenate synthetase family. Homodimer.

The protein resides in the cytoplasm. The catalysed reaction is (R)-pantoate + beta-alanine + ATP = (R)-pantothenate + AMP + diphosphate + H(+). Its pathway is cofactor biosynthesis; (R)-pantothenate biosynthesis; (R)-pantothenate from (R)-pantoate and beta-alanine: step 1/1. Functionally, catalyzes the condensation of pantoate with beta-alanine in an ATP-dependent reaction via a pantoyl-adenylate intermediate. This Wigglesworthia glossinidia brevipalpis protein is Pantothenate synthetase.